We begin with the raw amino-acid sequence, 600 residues long: Pyranose dehydrogenase (600 aa).

Residues 1-25 form the signal peptide; that stretch reads MFPRVVRLNSRLVSFALLGLQIANG. Asparagine 99 and asparagine 114 each carry an N-linked (GlcNAc...) asparagine glycan. Residue histidine 127 is modified to Tele-8alpha-FAD histidine. N-linked (GlcNAc...) asparagine glycans are attached at residues asparagine 199, asparagine 275, asparagine 342, asparagine 399, and asparagine 507. Histidine 535 serves as the catalytic Proton acceptor. Residue asparagine 546 is glycosylated (N-linked (GlcNAc...) asparagine). The active site involves histidine 579.

Belongs to the GMC oxidoreductase family. Monomer. FAD serves as cofactor. In terms of processing, N-glycosylated.

The protein localises to the secreted. It carries out the reaction pyranose + acceptor = pyranos-2-ulose + reduced acceptor.. It catalyses the reaction pyranose + acceptor = pyranos-3-ulose + reduced acceptor.. The catalysed reaction is pyranose + acceptor = pyranos-2,3-diulose + reduced acceptor.. The enzyme catalyses a pyranoside + acceptor = a pyranosid-3-ulose + reduced acceptor.. It carries out the reaction a pyranoside + acceptor = a pyranosid-3,4-diulose + reduced acceptor.. In terms of biological role, catalyzes the single-oxidation or sequential double oxidation reaction of carbohydrates primarily at carbon-2 and/or carbon-3 with the concomitant reduction of the flavin. The enzyme exhibits a broad sugar substrate specificity, oxidizing different aldopyranoses to the corresponding C-1, C-2, C-3 or C-1,2, C-2,3 and C-3,4 (di)dehydro sugars with substrate-specific regioselectivity. Accepts only a narrow range of electron acceptors such as substituted benzoquinones and complexed metal ions and reacts extremely slowly with O(2) as acceptor. May play a role in the natural recycling of plant matter by oxidizing all major monosaccharides in lignocellulose and by reducing quinone compounds or reactive radical species generated during lignin depolymerization. This Agaricus xanthodermus (Poison yellow meadow mushroom) protein is Pyranose dehydrogenase.